We begin with the raw amino-acid sequence, 446 residues long: Neuropeptide Y receptor type 5 (446 aa).

The Extracellular portion of the chain corresponds to Met-1 to Tyr-42. 2 N-linked (GlcNAc...) asparagine glycosylation sites follow: Asn-10 and Asn-17. A helical membrane pass occupies residues Phe-43 to Leu-63. Residues Met-64–Asn-77 lie on the Cytoplasmic side of the membrane. Residues Phe-78–Thr-98 traverse the membrane as a helical segment. Topologically, residues Leu-99–Met-117 are extracellular. Residues Cys-114 and Cys-198 are joined by a disulfide bond. Residues Pro-118–Val-138 traverse the membrane as a helical segment. Residues Arg-139 to Gly-156 lie on the Cytoplasmic side of the membrane. The chain crosses the membrane as a helical span at residues Tyr-157 to Phe-177. The Extracellular portion of the chain corresponds to His-178–Arg-208. Residues Ile-209–Val-229 traverse the membrane as a helical segment. The Cytoplasmic portion of the chain corresponds to Ser-230 to Arg-369. Residues Leu-370–Val-390 traverse the membrane as a helical segment. Residues Thr-391–Tyr-407 are Extracellular-facing. A helical membrane pass occupies residues Cys-408–Leu-428. Over Asn-429–Ser-446 the chain is Cytoplasmic. Cys-442 carries S-palmitoyl cysteine lipidation.

Belongs to the G-protein coupled receptor 1 family.

The protein localises to the cell membrane. Functionally, receptor for neuropeptide Y and peptide YY. The activity of this receptor is mediated by G proteins that inhibit adenylate cyclase activity. Seems to be associated with food intake. Could be involved in feeding disorders. In Canis lupus familiaris (Dog), this protein is Neuropeptide Y receptor type 5 (NPY5R).